A 127-amino-acid chain; its full sequence is Holo-[acyl-carrier-protein] synthase (127 aa).

The Mg(2+) site is built by aspartate 7 and glutamate 56.

This sequence belongs to the P-Pant transferase superfamily. AcpS family. The cofactor is Mg(2+).

The protein localises to the cytoplasm. It catalyses the reaction apo-[ACP] + CoA = holo-[ACP] + adenosine 3',5'-bisphosphate + H(+). Functionally, transfers the 4'-phosphopantetheine moiety from coenzyme A to a Ser of acyl-carrier-protein. The polypeptide is Holo-[acyl-carrier-protein] synthase (Onion yellows phytoplasma (strain OY-M)).